Consider the following 252-residue polypeptide: Triosephosphate isomerase (252 aa).

10–12 contacts substrate; that stretch reads NWK. His96 functions as the Electrophile in the catalytic mechanism. Glu168 serves as the catalytic Proton acceptor. Substrate contacts are provided by residues Gly174, Ser214, and 235–236; that span reads GG.

Belongs to the triosephosphate isomerase family. Homodimer.

The protein resides in the cytoplasm. It catalyses the reaction D-glyceraldehyde 3-phosphate = dihydroxyacetone phosphate. Its pathway is carbohydrate biosynthesis; gluconeogenesis. The protein operates within carbohydrate degradation; glycolysis; D-glyceraldehyde 3-phosphate from glycerone phosphate: step 1/1. Its function is as follows. Involved in the gluconeogenesis. Catalyzes stereospecifically the conversion of dihydroxyacetone phosphate (DHAP) to D-glyceraldehyde-3-phosphate (G3P). The protein is Triosephosphate isomerase of Streptococcus pyogenes serotype M6 (strain ATCC BAA-946 / MGAS10394).